The following is a 427-amino-acid chain: Phosphatidylglycerol--prolipoprotein diacylglyceryl transferase (427 aa).

The next 4 helical transmembrane spans lie at 21–41 (VPIRAYALFIIAGIVAALLIG), 53–73 (GVIYDIALWTVPFGLVGGRLY), 96–116 (IWDGGLGIWGAVALGAVGAWI), and 122–142 (GIPLPAFADALAPGIILAQAI). Residue arginine 144 coordinates a 1,2-diacyl-sn-glycero-3-phospho-(1'-sn-glycerol). 2 consecutive transmembrane segments (helical) span residues 189 to 209 (VALVVQPTFLYELLWNLLIFV) and 256 to 276 (INSFTSTFVFIGAVVYLMAAP). The disordered stretch occupies residues 280 to 427 (EDPESLRGNQ…ARLRERLSGR (148 aa)). Low complexity predominate over residues 299–330 (EPATVAATTEAATEGVAAPADGAEAAGADATA). Residues 332–346 (RPEESAEPDVEKPES) are compositionally biased toward basic and acidic residues. Over residues 347-404 (EETEAAEEASEPEAEEPEAPEAEEPEEPETEEPEADSGEEPEEESGEAPEQLVAEEPE) the composition is skewed to acidic residues. Residues 411 to 427 (ETKRRWGARLRERLSGR) show a composition bias toward basic and acidic residues.

This sequence belongs to the Lgt family.

Its subcellular location is the cell membrane. The enzyme catalyses L-cysteinyl-[prolipoprotein] + a 1,2-diacyl-sn-glycero-3-phospho-(1'-sn-glycerol) = an S-1,2-diacyl-sn-glyceryl-L-cysteinyl-[prolipoprotein] + sn-glycerol 1-phosphate + H(+). Its pathway is protein modification; lipoprotein biosynthesis (diacylglyceryl transfer). Its function is as follows. Catalyzes the transfer of the diacylglyceryl group from phosphatidylglycerol to the sulfhydryl group of the N-terminal cysteine of a prolipoprotein, the first step in the formation of mature lipoproteins. The polypeptide is Phosphatidylglycerol--prolipoprotein diacylglyceryl transferase (Mycolicibacterium paratuberculosis (strain ATCC BAA-968 / K-10) (Mycobacterium paratuberculosis)).